A 353-amino-acid polypeptide reads, in one-letter code: tRNA-specific 2-thiouridylase MnmA 2 (353 aa).

Residues 9-16 (AMSGGVDS) and Met-35 each bind ATP. Cys-98 serves as the catalytic Nucleophile. Cys-98 and Cys-194 are disulfide-bonded. Gly-122 is a binding site for ATP. The tract at residues 144-146 (KDQ) is interaction with tRNA. Catalysis depends on Cys-194, which acts as the Cysteine persulfide intermediate. Residues 300–301 (RY) form an interaction with tRNA region.

It belongs to the MnmA/TRMU family.

The protein resides in the cytoplasm. The catalysed reaction is S-sulfanyl-L-cysteinyl-[protein] + uridine(34) in tRNA + AH2 + ATP = 2-thiouridine(34) in tRNA + L-cysteinyl-[protein] + A + AMP + diphosphate + H(+). Its function is as follows. Catalyzes the 2-thiolation of uridine at the wobble position (U34) of tRNA, leading to the formation of s(2)U34. This chain is tRNA-specific 2-thiouridylase MnmA 2, found in Clostridium botulinum (strain Langeland / NCTC 10281 / Type F).